A 292-amino-acid polypeptide reads, in one-letter code: Cytidine deaminase (292 aa).

2 CMP/dCMP-type deaminase domains span residues 47–167 (TPLK…FGPK) and 186–292 (DHQD…YYSL). Residue 88–90 (NQE) participates in substrate binding. His101 provides a ligand contact to Zn(2+). Glu103 acts as the Proton donor in catalysis. Residues Cys128 and Cys131 each coordinate Zn(2+).

Belongs to the cytidine and deoxycytidylate deaminase family. In terms of assembly, homodimer. The cofactor is Zn(2+).

It carries out the reaction cytidine + H2O + H(+) = uridine + NH4(+). It catalyses the reaction 2'-deoxycytidine + H2O + H(+) = 2'-deoxyuridine + NH4(+). Functionally, this enzyme scavenges exogenous and endogenous cytidine and 2'-deoxycytidine for UMP synthesis. In Haemophilus influenzae (strain PittEE), this protein is Cytidine deaminase.